A 298-amino-acid polypeptide reads, in one-letter code: Protoheme IX farnesyltransferase (298 aa).

Helical transmembrane passes span 19 to 39 (VMSLVVFTAFVGLWIAPQPVN), 40 to 60 (PFVAFCAVLFIALGGGASGAL), 91 to 111 (LAVGIALSGLSVMMLGAGGNW), 112 to 132 (FAAGFLAFTIFFYAVVYTIWL), 140 to 160 (IVIGGAAGAFPPMIGWALPTG), 167 to 187 (LLMFALIFFWTPPHFWALALF), 213 to 233 (IFAYTLVLAPFALWLGFTSVG), 236 to 256 (LYLAVSVVLNALFIAGGWQIL), and 277 to 297 (LSLYYTFLHFLALLVQHWVGG).

Belongs to the UbiA prenyltransferase family. Protoheme IX farnesyltransferase subfamily. Interacts with CtaA.

It is found in the cell inner membrane. The enzyme catalyses heme b + (2E,6E)-farnesyl diphosphate + H2O = Fe(II)-heme o + diphosphate. It functions in the pathway porphyrin-containing compound metabolism; heme O biosynthesis; heme O from protoheme: step 1/1. Functionally, converts heme B (protoheme IX) to heme O by substitution of the vinyl group on carbon 2 of heme B porphyrin ring with a hydroxyethyl farnesyl side group. The polypeptide is Protoheme IX farnesyltransferase (Paracoccus denitrificans).